The primary structure comprises 141 residues: Large ribosomal subunit protein uL11 (141 aa).

Belongs to the universal ribosomal protein uL11 family. As to quaternary structure, part of the ribosomal stalk of the 50S ribosomal subunit. Interacts with L10 and the large rRNA to form the base of the stalk. L10 forms an elongated spine to which L12 dimers bind in a sequential fashion forming a multimeric L10(L12)X complex. Post-translationally, one or more lysine residues are methylated.

Its function is as follows. Forms part of the ribosomal stalk which helps the ribosome interact with GTP-bound translation factors. This Moorella thermoacetica (strain ATCC 39073 / JCM 9320) protein is Large ribosomal subunit protein uL11.